Consider the following 191-residue polypeptide: Large ribosomal subunit protein bL12cz (191 aa).

A chloroplast-targeting transit peptide spans 1-58; the sequence is MASTTLSIATTIRSSSYPTLASINHFPSRTTTIEFPSRFGGGSSSTLTHRATHLRPIA.

It belongs to the bacterial ribosomal protein bL12 family.

The protein resides in the plastid. Its subcellular location is the chloroplast. The protein is Large ribosomal subunit protein bL12cz (RPL12A) of Arabidopsis thaliana (Mouse-ear cress).